Reading from the N-terminus, the 158-residue chain is 2-C-methyl-D-erythritol 2,4-cyclodiphosphate synthase (158 aa).

A divalent metal cation is bound by residues Asp8 and His10. 4-CDP-2-C-methyl-D-erythritol 2-phosphate contacts are provided by residues 8-10 and 34-35; these read DVH and HS. Position 42 (His42) interacts with a divalent metal cation. 4-CDP-2-C-methyl-D-erythritol 2-phosphate contacts are provided by residues 56 to 58, 61 to 65, 100 to 106, 132 to 135, Phe139, and Arg142; these read DIG, FPDTD, AQRPKMA, and TTEE.

The protein belongs to the IspF family. In terms of assembly, homotrimer. It depends on a divalent metal cation as a cofactor.

It carries out the reaction 4-CDP-2-C-methyl-D-erythritol 2-phosphate = 2-C-methyl-D-erythritol 2,4-cyclic diphosphate + CMP. The protein operates within isoprenoid biosynthesis; isopentenyl diphosphate biosynthesis via DXP pathway; isopentenyl diphosphate from 1-deoxy-D-xylulose 5-phosphate: step 4/6. In terms of biological role, involved in the biosynthesis of isopentenyl diphosphate (IPP) and dimethylallyl diphosphate (DMAPP), two major building blocks of isoprenoid compounds. Catalyzes the conversion of 4-diphosphocytidyl-2-C-methyl-D-erythritol 2-phosphate (CDP-ME2P) to 2-C-methyl-D-erythritol 2,4-cyclodiphosphate (ME-CPP) with a corresponding release of cytidine 5-monophosphate (CMP). This is 2-C-methyl-D-erythritol 2,4-cyclodiphosphate synthase from Pelobacter propionicus (strain DSM 2379 / NBRC 103807 / OttBd1).